A 175-amino-acid chain; its full sequence is GLLGLGYGGYGYGAALAAPAAVSYAAPAIAAAPAVSYAAPAIAAAPAISYAAPAIAAAPAISYAAPAIAAAPAVSYAAPAIAAAPAISYAAAPALRYAAAPAIRYAAPAVARVAPAISYAAVAVARVAPAVSYAAPALSYARYAAPAVSYAAPALSYAAPALSYAAPAIAKYALH.

19 consecutive repeat copies span residues 17–20 (AAPA), 25–28 (AAPA), 31–34 (AAPA), 38–41 (AAPA), 44–47 (AAPA), 51–54 (AAPA), 57–60 (AAPA), 64–67 (AAPA), 70–73 (AAPA), 77–80 (AAPA), 83–86 (AAPA), 91–94 (AAPA), 99–102 (AAPA), 106–109 (AAPA), 134–137 (AAPA), 144–147 (AAPA), 151–154 (AAPA), 158–161 (AAPA), and 165–168 (AAPA).

Its function is as follows. Component of the cuticle of migratory locust which contains more than 100 different structural proteins. This is Cuticle protein 16.5, isoform B from Locusta migratoria (Migratory locust).